A 938-amino-acid chain; its full sequence is Isoleucine--tRNA ligase (938 aa).

A 'HIGH' region motif is present at residues 58–68 (PYANGSIHIGH). At Lys-183 the chain carries N6-acetyllysine. Residue Glu-561 coordinates L-isoleucyl-5'-AMP. A 'KMSKS' region motif is present at residues 602 to 606 (KMSKS). An ATP-binding site is contributed by Lys-605. Cys-901, Cys-904, Cys-921, and Cys-924 together coordinate Zn(2+).

The protein belongs to the class-I aminoacyl-tRNA synthetase family. IleS type 1 subfamily. In terms of assembly, monomer. The cofactor is Zn(2+).

It localises to the cytoplasm. It carries out the reaction tRNA(Ile) + L-isoleucine + ATP = L-isoleucyl-tRNA(Ile) + AMP + diphosphate. In terms of biological role, catalyzes the attachment of isoleucine to tRNA(Ile). As IleRS can inadvertently accommodate and process structurally similar amino acids such as valine, to avoid such errors it has two additional distinct tRNA(Ile)-dependent editing activities. One activity is designated as 'pretransfer' editing and involves the hydrolysis of activated Val-AMP. The other activity is designated 'posttransfer' editing and involves deacylation of mischarged Val-tRNA(Ile). In Shigella flexneri, this protein is Isoleucine--tRNA ligase.